Reading from the N-terminus, the 75-residue chain is Caerin-1.1 (75 aa).

The signal sequence occupies residues Met-1–Cys-22. Positions Glu-23–Arg-49 are excised as a propeptide. The tract at residues Glu-24 to Arg-49 is disordered. Over residues Asp-30–Ser-45 the composition is skewed to acidic residues. Leucine amide is present on Leu-74.

The protein belongs to the frog skin active peptide (FSAP) family. Caerin subfamily. Post-translationally, the major product is Caerin-1.1; in addition, different peptides are produced that are missing some amino acid residues at the N-terminus or C-terminus. Caerin-1.1.1 and Caerin-1.1.4 are inactive. In terms of tissue distribution, expressed by the skin parotoid and/or rostral glands.

It is found in the secreted. Antimicrobial peptide with antibacterial and antiviral activities. Adopts an alpha helical conformation which can disrupt bacterial membranes. Inhibits the formation of NO by neuronal nitric oxide synthase (nNOS) at micromolar concentrations. Acts by a non-competitive mechanism, probably by binding to calcium/calmodulin and as a consequence blocking calmodulin attachment to nNOS. In terms of biological role, is inactive. The protein is Caerin-1.1 of Ranoidea caerulea (Green tree frog).